Here is a 259-residue protein sequence, read N- to C-terminus: Phosphatidylserine decarboxylase proenzyme (259 aa).

Residue Ser183 is the Schiff-base intermediate with substrate; via pyruvic acid of the active site. Residue Ser183 is modified to Pyruvic acid (Ser); by autocatalysis.

It belongs to the phosphatidylserine decarboxylase family. PSD-A subfamily. In terms of assembly, heterodimer of a large membrane-associated beta subunit and a small pyruvoyl-containing alpha subunit. Pyruvate is required as a cofactor. Post-translationally, is synthesized initially as an inactive proenzyme. Formation of the active enzyme involves a self-maturation process in which the active site pyruvoyl group is generated from an internal serine residue via an autocatalytic post-translational modification. Two non-identical subunits are generated from the proenzyme in this reaction, and the pyruvate is formed at the N-terminus of the alpha chain, which is derived from the carboxyl end of the proenzyme. The post-translation cleavage follows an unusual pathway, termed non-hydrolytic serinolysis, in which the side chain hydroxyl group of the serine supplies its oxygen atom to form the C-terminus of the beta chain, while the remainder of the serine residue undergoes an oxidative deamination to produce ammonia and the pyruvoyl prosthetic group on the alpha chain.

Its subcellular location is the cell membrane. The catalysed reaction is a 1,2-diacyl-sn-glycero-3-phospho-L-serine + H(+) = a 1,2-diacyl-sn-glycero-3-phosphoethanolamine + CO2. It participates in phospholipid metabolism; phosphatidylethanolamine biosynthesis; phosphatidylethanolamine from CDP-diacylglycerol: step 2/2. In terms of biological role, catalyzes the formation of phosphatidylethanolamine (PtdEtn) from phosphatidylserine (PtdSer). The polypeptide is Phosphatidylserine decarboxylase proenzyme (Neisseria gonorrhoeae (strain NCCP11945)).